Here is a 163-residue protein sequence, read N- to C-terminus: R-phycoerythrin alpha chain (163 aa).

(2R,3E)-phycoerythrobilin-binding residues include C82 and C139.

This sequence belongs to the phycobiliprotein family. As to quaternary structure, heterodimer of an alpha and a beta chain. Post-translationally, contains two covalently linked bilin chromophores.

The protein resides in the plastid. It is found in the chloroplast thylakoid membrane. Light-harvesting photosynthetic bile pigment-protein from the phycobiliprotein complex. The protein is R-phycoerythrin alpha chain (cpeA) of Aglaothamnion neglectum (Red alga).